Consider the following 370-residue polypeptide: DNA primase small subunit PriS (370 aa).

Active-site residues include Asp-92, Asp-94, and Asp-272.

Belongs to the eukaryotic-type primase small subunit family. In terms of assembly, heterodimer of a small subunit (PriS) and a large subunit (PriL). Mg(2+) is required as a cofactor. Requires Mn(2+) as cofactor.

Functionally, catalytic subunit of DNA primase, an RNA polymerase that catalyzes the synthesis of short RNA molecules used as primers for DNA polymerase during DNA replication. The small subunit contains the primase catalytic core and has DNA synthesis activity on its own. Binding to the large subunit stabilizes and modulates the activity, increasing the rate of DNA synthesis while decreasing the length of the DNA fragments, and conferring RNA synthesis capability. The DNA polymerase activity may enable DNA primase to also catalyze primer extension after primer synthesis. May also play a role in DNA repair. This Picrophilus torridus (strain ATCC 700027 / DSM 9790 / JCM 10055 / NBRC 100828 / KAW 2/3) protein is DNA primase small subunit PriS.